The following is a 102-amino-acid chain: uncharacterized protein (102 aa).

Positions 1 to 21 (MAESVNENNNNAGDSNGSGRT) are disordered. A glycan (N-linked (GlcNAc...) asparagine) is linked at asparagine 16. Residues 24-44 (NTIVTIVVVVIVVTLIIILAT) form a helical membrane-spanning segment. The tract at residues 49–102 (IGGSGKKVGAEEPATKLSSKSDDRNGGPNKKSPAKGSSKDDNNTEESVQSNLYG) is disordered. Residues 56–73 (VGAEEPATKLSSKSDDRN) are compositionally biased toward basic and acidic residues. Asparagine 90 is a glycosylation site (N-linked (GlcNAc...) asparagine). Polar residues predominate over residues 93–102 (EESVQSNLYG).

The protein resides in the membrane. This is an uncharacterized protein from Encephalitozoon cuniculi (strain GB-M1) (Microsporidian parasite).